The chain runs to 125 residues: Phosphoribosyl-AMP cyclohydrolase (125 aa).

Residue Asp-74 participates in Mg(2+) binding. Cys-75 contacts Zn(2+). Positions 76 and 78 each coordinate Mg(2+). Residues Cys-92 and Cys-99 each contribute to the Zn(2+) site.

It belongs to the PRA-CH family. In terms of assembly, homodimer. Mg(2+) is required as a cofactor. Zn(2+) serves as cofactor.

The protein localises to the cytoplasm. It carries out the reaction 1-(5-phospho-beta-D-ribosyl)-5'-AMP + H2O = 1-(5-phospho-beta-D-ribosyl)-5-[(5-phospho-beta-D-ribosylamino)methylideneamino]imidazole-4-carboxamide. It participates in amino-acid biosynthesis; L-histidine biosynthesis; L-histidine from 5-phospho-alpha-D-ribose 1-diphosphate: step 3/9. Functionally, catalyzes the hydrolysis of the adenine ring of phosphoribosyl-AMP. The protein is Phosphoribosyl-AMP cyclohydrolase of Citrifermentans bemidjiense (strain ATCC BAA-1014 / DSM 16622 / JCM 12645 / Bem) (Geobacter bemidjiensis).